We begin with the raw amino-acid sequence, 324 residues long: Putative exosome complex exonuclease RRP42 (324 aa).

The protein belongs to the RNase PH family. Component of the RNA exosome complex.

Its subcellular location is the nucleus. It localises to the nucleolus. The protein localises to the cytoplasm. Its function is as follows. Non-catalytic component of the RNA exosome complex which has 3'-&gt;5' exoribonuclease activity and participates in a multitude of cellular RNA processing and degradation events. In Dictyostelium discoideum (Social amoeba), this protein is Putative exosome complex exonuclease RRP42 (exosc7).